A 145-amino-acid polypeptide reads, in one-letter code: Aegerolysin Aa-Pri1 (145 aa).

Residues 1–8 (MDSNKDER) constitute a propeptide that is removed on maturation.

Belongs to the aegerolysin family.

The chain is Aegerolysin Aa-Pri1 (AA-PRI1) from Cyclocybe aegerita (Black poplar mushroom).